The chain runs to 910 residues: MPALDSLKTLRSLAVDGKTYHYYSLPEAARTLGDLGKLPMSLKVLLENLLRWEDGSTVTGDDLKALAGWLRERRSDREIQYRPARVLMQDFTGVPAVVDLAAMRAAMAKAGGDPQKINPLSPVDLVIDHSVMVDKFASESAFEQNVEIEMQRNGERYAFLRWGQNAFDNFSVVPPGTGICHQVNLEYLGRTVWTKDEDGRTYAFPDTLVGTDSHTTMINGLGVLGWGVGGIEAEAAMLGQPVSMLIPEVIGFKLTGKLREGITATDLVLTVTQMLRKKGVVGKFVEFYGDGLADLPLADRATIANMAPEYGATCGFFPVDEITLGYLRLSGRPESTVKLVEAYSKEQGLWREKGHEPVFTDTLHLDMGEVEASLAGPKRPQDRVALQNVASAFNEFLGLQLHPSSTEEGRLLSEGGGGTAVGANAAFGEIDYQHDGQTHRLKNGAVVIAAITSCTNTSNPSVMMAAGLLAKKAVEKGLQRKPWVKSSLAPGSKVVTDYFKAAGLTRYLDELGFDLVGYGCTTCIGNSGPLLEPIEKAIQQADLTVASVLSGNRNFEGRVHPLVKTNWLASPPLVVAYALAGSVRINLSEEPLGTGKDGQPVYLKDIWPSQKEIAEAIQKVDTEMFHKEYAEVFAGDEKWQAIQVPQSDTYEWQADSTYIQHPPFFEHIAEAPPAIADVEQARVLAVLGDSVTTDHISPAGNIKADSPAGRYLREHGVEPKDFNSYGSRRGNHEVMMRGTFANIRIKNEMLGGEEGGNTLYVPSGEKLAIYDAAMRYQEDGTPLVIVAGKEYGTGSSRDWAAKGTNLLGVKAVIAESFERIHRSNLVGMGVLPLQFENGQDRKSLKLTGKEVLNIRGLGGELKPHMPLSVEVTREDGSQDSFKVLCRIDTLNEVEYFKAGGILHYVLRSML.

[4Fe-4S] cluster contacts are provided by Cys454, Cys520, and Cys523.

The protein belongs to the aconitase/IPM isomerase family. Monomer. [4Fe-4S] cluster is required as a cofactor.

It catalyses the reaction citrate = D-threo-isocitrate. The catalysed reaction is (2S,3R)-3-hydroxybutane-1,2,3-tricarboxylate = 2-methyl-cis-aconitate + H2O. Its pathway is carbohydrate metabolism; tricarboxylic acid cycle; isocitrate from oxaloacetate: step 2/2. The protein operates within organic acid metabolism; propanoate degradation. Functionally, involved in the catabolism of short chain fatty acids (SCFA) via the tricarboxylic acid (TCA)(acetyl degradation route) and probably the 2-methylcitrate cycle I (propionate degradation route). Catalyzes the reversible isomerization of citrate to isocitrate via cis-aconitate. Could catalyze the hydration of 2-methyl-cis-aconitate to yield (2R,3S)-2-methylisocitrate. The apo form of AcnA functions as a RNA-binding regulatory protein. This Pseudomonas aeruginosa (strain ATCC 15692 / DSM 22644 / CIP 104116 / JCM 14847 / LMG 12228 / 1C / PRS 101 / PAO1) protein is Aconitate hydratase A (acnA).